A 108-amino-acid polypeptide reads, in one-letter code: Inner membrane protein H108R (108 aa).

A helical membrane pass occupies residues 10–32 (LIVIITILITTRELSTTMLIVSL). Polar residues predominate over residues 49 to 64 (ENNTFSMPQKNSFNES). The interval 49–69 (ENNTFSMPQKNSFNESYNKDK) is disordered. N-linked (GlcNAc...) asparagine; by host glycans are attached at residues asparagine 50 and asparagine 62.

This sequence belongs to the asfivirus H108R family.

The protein resides in the virion membrane. This chain is Inner membrane protein H108R, found in African swine fever virus (strain Badajoz 1971 Vero-adapted) (Ba71V).